A 384-amino-acid polypeptide reads, in one-letter code: MKVTSLDGRRLRKMLRKEAEARCVVLDCRPYLAFAASSVRGSLNVNLNSVVLRRARGGAVSARYVLADEAARARLLQEGGGGVAAVVVLDQGSRHWQKLREESAARVVLTSLLACLSAGPRVYFLKGGYETFYSQYPECCVDAKPISQEKLEGERGLLSQCGKPILSVAYRPAYDQGGPVEILPFLYLGSAYHASKCEFLANLHITALLNVSRRTSEACTTHLHYKWIPVEDSHTADISSHFQEAIDFIDCVREEGGKVLVHCEAGVSRSPTICMAYLMKTKQFRLKEAFEYIKQRRSVVSPNFGFMGQLLQYESEILPSTPTPQPPSCQGEAASSTFIGHLQTLSPDMQGAYCTFPTSVLAPVPTHATVAELHRSPVATATSC.

The region spanning 19–141 is the Rhodanese domain; the sequence is AEARCVVLDC…FYSQYPECCV (123 aa). The short motif at 53-74 is the Nuclear localization signal element; the sequence is RRARGGAVSARYVLADEAARAR. One can recognise a Tyrosine-protein phosphatase domain in the interval 178-319; that stretch reads GPVEILPFLY…LLQYESEILP (142 aa). The active-site Phosphocysteine intermediate is the Cys263.

Belongs to the protein-tyrosine phosphatase family. Non-receptor class dual specificity subfamily.

It localises to the nucleus. The enzyme catalyses O-phospho-L-tyrosyl-[protein] + H2O = L-tyrosyl-[protein] + phosphate. It carries out the reaction O-phospho-L-seryl-[protein] + H2O = L-seryl-[protein] + phosphate. The catalysed reaction is O-phospho-L-threonyl-[protein] + H2O = L-threonyl-[protein] + phosphate. In terms of biological role, dual specificity protein phosphatase; active with phosphotyrosine, phosphoserine and phosphothreonine residues. The highest relative activity is toward ERK1. This chain is Dual specificity protein phosphatase 5 (Dusp5), found in Rattus norvegicus (Rat).